We begin with the raw amino-acid sequence, 437 residues long: Protein RecA (437 aa).

69–76 (GPESSGKT) is an ATP binding site. Residues 343–437 (HDAAVRTSPD…GNGKSVKRKG (95 aa)) are disordered. Composition is skewed to polar residues over residues 350-371 (SPDT…SGSP), 380-391 (GAVNNSRDSTGG), and 400-426 (LNLS…NQKP).

Belongs to the RecA family.

It localises to the cytoplasm. Its function is as follows. Can catalyze the hydrolysis of ATP in the presence of single-stranded DNA, the ATP-dependent uptake of single-stranded DNA by duplex DNA, and the ATP-dependent hybridization of homologous single-stranded DNAs. It interacts with LexA causing its activation and leading to its autocatalytic cleavage. This chain is Protein RecA, found in Tropheryma whipplei (strain Twist) (Whipple's bacillus).